The following is a 71-amino-acid chain: ATP synthase subunit c (71 aa).

Transmembrane regions (helical) follow at residues Ile4–Val24 and Phe47–Leu67.

Belongs to the ATPase C chain family. F-type ATPases have 2 components, F(1) - the catalytic core - and F(0) - the membrane proton channel. F(1) has five subunits: alpha(3), beta(3), gamma(1), delta(1), epsilon(1). F(0) has three main subunits: a(1), b(2) and c(10-14). The alpha and beta chains form an alternating ring which encloses part of the gamma chain. F(1) is attached to F(0) by a central stalk formed by the gamma and epsilon chains, while a peripheral stalk is formed by the delta and b chains.

It localises to the cell membrane. In terms of biological role, f(1)F(0) ATP synthase produces ATP from ADP in the presence of a proton or sodium gradient. F-type ATPases consist of two structural domains, F(1) containing the extramembraneous catalytic core and F(0) containing the membrane proton channel, linked together by a central stalk and a peripheral stalk. During catalysis, ATP synthesis in the catalytic domain of F(1) is coupled via a rotary mechanism of the central stalk subunits to proton translocation. Its function is as follows. Key component of the F(0) channel; it plays a direct role in translocation across the membrane. A homomeric c-ring of between 10-14 subunits forms the central stalk rotor element with the F(1) delta and epsilon subunits. In Enterococcus hirae (strain ATCC 9790 / DSM 20160 / JCM 8729 / LMG 6399 / NBRC 3181 / NCIMB 6459 / NCDO 1258 / NCTC 12367 / WDCM 00089 / R), this protein is ATP synthase subunit c.